A 239-amino-acid polypeptide reads, in one-letter code: Probable transcriptional regulatory protein Pnuc_0618 (239 aa).

The segment at 1–21 (MAGHSKWANIQHRKGRQDEKR) is disordered.

The protein belongs to the TACO1 family.

Its subcellular location is the cytoplasm. This is Probable transcriptional regulatory protein Pnuc_0618 from Polynucleobacter asymbioticus (strain DSM 18221 / CIP 109841 / QLW-P1DMWA-1) (Polynucleobacter necessarius subsp. asymbioticus).